A 396-amino-acid polypeptide reads, in one-letter code: Beta-1,3-N-acetylglucosaminyltransferase radical fringe (396 aa).

Residues 1–6 (MNFSCL) lie on the Cytoplasmic side of the membrane. A helical; Signal-anchor for type II membrane protein transmembrane segment spans residues 7-27 (GLSKICFLVSVIFCTFLLLFI). The Lumenal portion of the chain corresponds to 28–396 (PKTKTPWRPR…THWCPPRKTR (369 aa)). N-linked (GlcNAc...) asparagine glycans are attached at residues asparagine 49 and asparagine 120. Substrate is bound at residue arginine 145. The N-linked (GlcNAc...) asparagine glycan is linked to asparagine 184. 2 cysteine pairs are disulfide-bonded: cysteine 185/cysteine 196 and cysteine 214/cysteine 277. Residue aspartate 218 coordinates substrate. Aspartate 219 serves as a coordination point for Mn(2+). The active site involves aspartate 307. Mn(2+) is bound at residue histidine 331. Cysteines 381 and 390 form a disulfide.

This sequence belongs to the glycosyltransferase 31 family. Mn(2+) is required as a cofactor. Detected in the mesanchymal region of the developing limb. Expressed in mesoderm but not in ectoderm with no evident boundary of expression.

The protein resides in the golgi apparatus membrane. The enzyme catalyses 3-O-(alpha-L-fucosyl)-L-threonyl-[EGF-like domain protein] + UDP-N-acetyl-alpha-D-glucosamine = 3-O-(N-acetyl-beta-D-glucosaminyl-(1-&gt;3)-alpha-L-fucosyl)-L-threonyl-[EGF-like domain protein] + UDP + H(+). It catalyses the reaction 3-O-(alpha-L-fucosyl)-L-seryl-[EGF-like domain protein] + UDP-N-acetyl-alpha-D-glucosamine = 3-O-(N-acetyl-beta-D-glucosaminyl-(1-&gt;3)-alpha-L-fucosyl)-L-seryl-[EGF-like domain protein] + UDP + H(+). Functionally, glycosyltransferase that initiates the elongation of O-linked fucose residues attached to EGF-like repeats in the extracellular domain of Notch molecules. Involved in forelimb development and in adult forelimb regeneration. The sequence is that of Beta-1,3-N-acetylglucosaminyltransferase radical fringe (RFNG) from Notophthalmus viridescens (Eastern newt).